We begin with the raw amino-acid sequence, 512 residues long: Maturase K (512 aa).

This sequence belongs to the intron maturase 2 family. MatK subfamily.

Its subcellular location is the plastid. The protein resides in the chloroplast. In terms of biological role, usually encoded in the trnK tRNA gene intron. Probably assists in splicing its own and other chloroplast group II introns. The sequence is that of Maturase K from Amorphophallus titanum (Titan arum).